A 570-amino-acid polypeptide reads, in one-letter code: Protein HEATR9 (570 aa).

The sequence is that of Protein HEATR9 (HEATR9) from Homo sapiens (Human).